The chain runs to 359 residues: Phospho-N-acetylmuramoyl-pentapeptide-transferase (359 aa).

10 helical membrane passes run 3–23 (QILIAVAVAVTVSILLTPVLI), 55–75 (VAILAGIWAGYLGAHLAGLAF), 80–100 (IGASGLLVLGLATALGGVGFI), 117–137 (TAKTVGQITSAVLFGVLVLQF), 156–176 (IATVTLAPVLFVLFCVVIVSA), 187–207 (LDGLAAGTMAMVTAAYVLITF), 231–251 (LALIAAATAGACIGFLWWNAA), 255–275 (IFMGDTGSLALGGVIAGLSVT), 280–300 (ILAVVLGALFVAEITSVVLQI), and 334–354 (FWLLTAITCGLGVALFYGEWL).

The protein belongs to the glycosyltransferase 4 family. MraY subfamily. It depends on Mg(2+) as a cofactor.

It is found in the cell membrane. It carries out the reaction UDP-N-acetyl-alpha-D-muramoyl-L-alanyl-gamma-D-glutamyl-meso-2,6-diaminopimeloyl-D-alanyl-D-alanine + di-trans,octa-cis-undecaprenyl phosphate = di-trans,octa-cis-undecaprenyl diphospho-N-acetyl-alpha-D-muramoyl-L-alanyl-D-glutamyl-meso-2,6-diaminopimeloyl-D-alanyl-D-alanine + UMP. It functions in the pathway cell wall biogenesis; peptidoglycan biosynthesis. In terms of biological role, catalyzes the initial step of the lipid cycle reactions in the biosynthesis of the cell wall peptidoglycan: transfers peptidoglycan precursor phospho-MurNAc-pentapeptide from UDP-MurNAc-pentapeptide onto the lipid carrier undecaprenyl phosphate, yielding undecaprenyl-pyrophosphoryl-MurNAc-pentapeptide, known as lipid I. This Mycobacterium tuberculosis (strain ATCC 25177 / H37Ra) protein is Phospho-N-acetylmuramoyl-pentapeptide-transferase.